Consider the following 88-residue polypeptide: Small ribosomal subunit protein uS15 (88 aa).

The protein belongs to the universal ribosomal protein uS15 family. As to quaternary structure, part of the 30S ribosomal subunit. Forms a bridge to the 50S subunit in the 70S ribosome, contacting the 23S rRNA.

One of the primary rRNA binding proteins, it binds directly to 16S rRNA where it helps nucleate assembly of the platform of the 30S subunit by binding and bridging several RNA helices of the 16S rRNA. Its function is as follows. Forms an intersubunit bridge (bridge B4) with the 23S rRNA of the 50S subunit in the ribosome. The protein is Small ribosomal subunit protein uS15 of Sorangium cellulosum (strain So ce56) (Polyangium cellulosum (strain So ce56)).